A 522-amino-acid chain; its full sequence is Cytochrome P450 9c1 (522 aa).

C464 lines the heme pocket.

This sequence belongs to the cytochrome P450 family. Heme is required as a cofactor.

It localises to the endoplasmic reticulum membrane. Its subcellular location is the microsome membrane. Functionally, may be involved in the metabolism of insect hormones and in the breakdown of synthetic insecticides. This is Cytochrome P450 9c1 (Cyp9c1) from Drosophila melanogaster (Fruit fly).